The following is a 154-amino-acid chain: Troponin C, isoallergen Bla g 6.0301 (154 aa).

4 EF-hand domains span residues 11–46 (EQISVLRKAFDAFDREKSGSISTNMVEEILRLMGQP), 47–82 (FNRRTLEELIDEVDADKSGRLEFDEFVTLAAKFIIE), 87–122 (AMEKELREAFRLYDKEGNGYIPTSCLREILRELDEQ), and 123–154 (LTSDELDMMIEEIDADGSGTVDFDEFMEMMTG). Ca(2+) is bound by residues D60, D62, S64, R66, and E71. Residues D136, D138, S140, T142, and E147 each coordinate Ca(2+).

It belongs to the troponin C family.

Functionally, troponin is the central regulatory protein of striated muscle contraction. It consists of three components: Troponin-I (Tn-I) which is the inhibitor of actomyosin ATPase, Troponin-T (Tn-T) which contains the binding site for tropomyosin and Troponin-C (Tn-C). The binding of calcium to Tn-C abolishes the inhibitory action of Tn on actin filaments. This chain is Troponin C, isoallergen Bla g 6.0301, found in Blattella germanica (German cockroach).